The primary structure comprises 318 residues: NADH-ubiquinone oxidoreductase chain 1 (318 aa).

8 helical membrane passes run 3–23, 69–89, 102–122, 144–164, 171–191, 222–242, 253–273, and 294–314; these read LINL…LTLL, MLFI…WTPL, MLFI…SGWA, VTLA…TLLS, YIWL…STLA, LFFL…IILF, ELYT…FLWI, and LPLT…LAGI.

This sequence belongs to the complex I subunit 1 family. Core subunit of respiratory chain NADH dehydrogenase (Complex I) which is composed of 45 different subunits.

It localises to the mitochondrion inner membrane. The catalysed reaction is a ubiquinone + NADH + 5 H(+)(in) = a ubiquinol + NAD(+) + 4 H(+)(out). Its function is as follows. Core subunit of the mitochondrial membrane respiratory chain NADH dehydrogenase (Complex I) which catalyzes electron transfer from NADH through the respiratory chain, using ubiquinone as an electron acceptor. Essential for the catalytic activity and assembly of complex I. The protein is NADH-ubiquinone oxidoreductase chain 1 (MT-ND1) of Murina florium (Flores tube-nosed bat).